A 148-amino-acid chain; its full sequence is UPF0540 protein At1g62000 (148 aa).

The first 21 residues, 1 to 21 (MNATKFVVLLVIGILCAIVTA), serve as a signal peptide directing secretion. Low complexity predominate over residues 123 to 132 (RANGKVASAS). Residues 123-148 (RANGKVASASRVKGSSEKKKGKGKKD) are disordered.

The protein belongs to the UPF0540 family.

The sequence is that of UPF0540 protein At1g62000 from Arabidopsis thaliana (Mouse-ear cress).